The chain runs to 245 residues: 2-C-methyl-D-erythritol 4-phosphate cytidylyltransferase (245 aa).

This sequence belongs to the IspD/TarI cytidylyltransferase family. IspD subfamily.

It carries out the reaction 2-C-methyl-D-erythritol 4-phosphate + CTP + H(+) = 4-CDP-2-C-methyl-D-erythritol + diphosphate. It participates in isoprenoid biosynthesis; isopentenyl diphosphate biosynthesis via DXP pathway; isopentenyl diphosphate from 1-deoxy-D-xylulose 5-phosphate: step 2/6. Its function is as follows. Catalyzes the formation of 4-diphosphocytidyl-2-C-methyl-D-erythritol from CTP and 2-C-methyl-D-erythritol 4-phosphate (MEP). This is 2-C-methyl-D-erythritol 4-phosphate cytidylyltransferase from Chloroherpeton thalassium (strain ATCC 35110 / GB-78).